An 822-amino-acid polypeptide reads, in one-letter code: DNA gyrase subunit A (822 aa).

Residues 32 to 497 (LPDVRDGLKP…QVLSLEDEDL (466 aa)) enclose the Topo IIA-type catalytic domain. The O-(5'-phospho-DNA)-tyrosine intermediate role is filled by Tyr120. A GyrA-box motif is present at residues 524-530 (QKRGGRG).

Belongs to the type II topoisomerase GyrA/ParC subunit family. In terms of assembly, heterotetramer, composed of two GyrA and two GyrB chains. In the heterotetramer, GyrA contains the active site tyrosine that forms a transient covalent intermediate with DNA, while GyrB binds cofactors and catalyzes ATP hydrolysis.

It is found in the cytoplasm. The catalysed reaction is ATP-dependent breakage, passage and rejoining of double-stranded DNA.. Its function is as follows. A type II topoisomerase that negatively supercoils closed circular double-stranded (ds) DNA in an ATP-dependent manner to modulate DNA topology and maintain chromosomes in an underwound state. Negative supercoiling favors strand separation, and DNA replication, transcription, recombination and repair, all of which involve strand separation. Also able to catalyze the interconversion of other topological isomers of dsDNA rings, including catenanes and knotted rings. Type II topoisomerases break and join 2 DNA strands simultaneously in an ATP-dependent manner. This chain is DNA gyrase subunit A, found in Streptococcus pneumoniae serotype 4 (strain ATCC BAA-334 / TIGR4).